The following is a 318-amino-acid chain: Adenylate isopentenyltransferase 4 (318 aa).

12 to 19 is a binding site for ATP; the sequence is GATGSGKS.

This sequence belongs to the IPP transferase family. Mg(2+) serves as cofactor. Expressed in immature seeds with highest expression in the chalazal endosperm.

It is found in the cytoplasm. The catalysed reaction is dimethylallyl diphosphate + ADP = N(6)-(dimethylallyl)adenosine 5'-diphosphate + diphosphate. It carries out the reaction dimethylallyl diphosphate + ATP = N(6)-(dimethylallyl)adenosine 5'-triphosphate + diphosphate. Involved in cytokinin biosynthesis. Catalyzes the transfer of an isopentenyl group from dimethylallyl diphosphate (DMAPP) to ATP and ADP, but not to AMP. Has no DMAPP:tRNA isopentenyltransferase activity. This chain is Adenylate isopentenyltransferase 4 (IPT4), found in Arabidopsis thaliana (Mouse-ear cress).